We begin with the raw amino-acid sequence, 427 residues long: Adenylosuccinate synthetase (427 aa).

GTP-binding positions include 12-18 (GDEGKGK) and 40-42 (GHT). The active-site Proton acceptor is the aspartate 13. Mg(2+)-binding residues include aspartate 13 and glycine 40. IMP is bound by residues 13–16 (DEGK), 38–41 (NAGH), threonine 128, arginine 142, glutamine 223, threonine 238, and arginine 302. The Proton donor role is filled by histidine 41. 298–304 (VTTGRAR) serves as a coordination point for substrate. GTP contacts are provided by residues arginine 304, 330–332 (KLD), and 412–414 (GVG).

This sequence belongs to the adenylosuccinate synthetase family. Homodimer. It depends on Mg(2+) as a cofactor.

The protein localises to the cytoplasm. It carries out the reaction IMP + L-aspartate + GTP = N(6)-(1,2-dicarboxyethyl)-AMP + GDP + phosphate + 2 H(+). Its pathway is purine metabolism; AMP biosynthesis via de novo pathway; AMP from IMP: step 1/2. Functionally, plays an important role in the de novo pathway of purine nucleotide biosynthesis. Catalyzes the first committed step in the biosynthesis of AMP from IMP. This is Adenylosuccinate synthetase from Frankia alni (strain DSM 45986 / CECT 9034 / ACN14a).